The chain runs to 332 residues: Probable ABC transporter permease protein YphD (332 aa).

Helical transmembrane passes span 28 to 48 (GLLVVIAILYLVFSLNAPGFI), 63 to 83 (IGIAAWAMTLIIISGEIDVSV), 84 to 104 (GPMVAFVSVCLAFLLQFEVPL), 105 to 125 (AVACLLVLLLGALMGTLAGVL), 131 to 151 (VPSFVATLGLWSALRGMGLFM), 172 to 192 (FLGVPVSALIMIVLFALFVFI), 222 to 242 (VRILIFTLSGLLAAVTGILLA), 251 to 271 (GAANGLEFDVIAAVVVGGTAL), 278 to 298 (LFGTLLGVLVITLIGNGLVLL), and 303 to 323 (FFQQVVRGVIIVVAVLANILL).

This sequence belongs to the binding-protein-dependent transport system permease family. AraH/RbsC subfamily.

Its subcellular location is the cell inner membrane. In terms of biological role, probably part of the binding-protein-dependent transport system YphDEF. Probably responsible for the translocation of the substrate across the membrane. The protein is Probable ABC transporter permease protein YphD (yphD) of Escherichia coli (strain K12).